Reading from the N-terminus, the 132-residue chain is Histone H2B.9 (132 aa).

The span at 1–11 shows a compositional bias: basic and acidic residues; sequence MAPKAEKKPAE. A disordered region spans residues 1–41; sequence MAPKAEKKPAEKAPAPKAEKKIAKEGGTSEIVKKKKKTKKS. A2 carries the n,N,N-trimethylalanine; alternate modification. A2 bears the N,N-dimethylalanine; alternate mark. N-methylalanine; alternate is present on A2. The residue at position 4 (K4) is an N6-methyllysine. Residues K7, K12, K20, and K21 each carry the N6-acetyllysine modification. K128 is covalently cross-linked (Glycyl lysine isopeptide (Lys-Gly) (interchain with G-Cter in ubiquitin)).

This sequence belongs to the histone H2B family. In terms of assembly, the nucleosome is a histone octamer containing two molecules each of H2A, H2B, H3 and H4 assembled in one H3-H4 heterotetramer and two H2A-H2B heterodimers. The octamer wraps approximately 147 bp of DNA. In terms of processing, can be acetylated to form H2BK6ac, H2BK33ac and H2BK34ac. Post-translationally, monoubiquitinated by BRE1 to form H2BK143ub1 and deubiquitinated by UBP26. Required for heterochromatic histone H3 di- and trimethylation at H3K4me. May give a specific tag for epigenetic transcriptional activation.

Its subcellular location is the nucleus. It localises to the chromosome. In terms of biological role, core component of nucleosome. Nucleosomes wrap and compact DNA into chromatin, limiting DNA accessibility to the cellular machineries which require DNA as a template. Histones thereby play a central role in transcription regulation, DNA repair, DNA replication and chromosomal stability. DNA accessibility is regulated via a complex set of post-translational modifications of histones, also called histone code, and nucleosome remodeling. This Arabidopsis thaliana (Mouse-ear cress) protein is Histone H2B.9.